The sequence spans 365 residues: METKLFSSASLIKPSGTSLLILLTVVLFLLMTLFQWLLTSSLEGIYAVILPVSVSAIACGLLGFGVIPLLRWLKTGQFVREDGPQSHLKKAGTPTMGGIFFIPVAVGVALIGSKFDPQVVAVGIVTLAYMMIGWVDDWQVLRQKSNKGISPKMKLLLQIAVAVLFCLWMLWTGSPNITNLSLPGNLIIPLGWLFWILAIFVLVAESNATNITDGVDGLASGTCAIAFLGLAAIVAPTSVGLMIFCACLSGGCLGFVLHNRNPAKVFMGDTGSLALGGALAAVGLLSGNLWGLFIISGIFFVESLSVIAQVSYYKATKGPDGQGKRLLKMAPLHHHLELSGWSETQIVGVFYLINAGLAILGFISR.

9 helical membrane-spanning segments follow: residues 19-39 (LLILLTVVLFLLMTLFQWLLT), 47-67 (AVILPVSVSAIACGLLGFGVI), 91-111 (AGTPTMGGIFFIPVAVGVALI), 115-135 (FDPQVVAVGIVTLAYMMIGWV), 155-175 (LLLQIAVAVLFCLWMLWTGSP), 184-204 (GNLIIPLGWLFWILAIFVLVA), 224-244 (AIAFLGLAAIVAPTSVGLMIF), 281-301 (AVGLLSGNLWGLFIISGIFFV), and 344-364 (TQIVGVFYLINAGLAILGFIS).

The protein belongs to the glycosyltransferase 4 family. MraY subfamily. It depends on Mg(2+) as a cofactor.

It localises to the cell inner membrane. The catalysed reaction is UDP-N-acetyl-alpha-D-muramoyl-L-alanyl-gamma-D-glutamyl-meso-2,6-diaminopimeloyl-D-alanyl-D-alanine + di-trans,octa-cis-undecaprenyl phosphate = di-trans,octa-cis-undecaprenyl diphospho-N-acetyl-alpha-D-muramoyl-L-alanyl-D-glutamyl-meso-2,6-diaminopimeloyl-D-alanyl-D-alanine + UMP. It functions in the pathway cell wall biogenesis; peptidoglycan biosynthesis. Catalyzes the initial step of the lipid cycle reactions in the biosynthesis of the cell wall peptidoglycan: transfers peptidoglycan precursor phospho-MurNAc-pentapeptide from UDP-MurNAc-pentapeptide onto the lipid carrier undecaprenyl phosphate, yielding undecaprenyl-pyrophosphoryl-MurNAc-pentapeptide, known as lipid I. This is Phospho-N-acetylmuramoyl-pentapeptide-transferase from Gloeothece citriformis (strain PCC 7424) (Cyanothece sp. (strain PCC 7424)).